The chain runs to 376 residues: uncharacterized protein (376 aa).

Residues 24–44 (YLSIISIISVFLLNSSIVYSC) form a helical membrane-spanning segment. H251 is a Zn(2+) binding site.

This sequence belongs to the peptidase M23B family. Zn(2+) is required as a cofactor.

It localises to the cell membrane. This is an uncharacterized protein from Buchnera aphidicola subsp. Baizongia pistaciae (strain Bp).